A 445-amino-acid chain; its full sequence is MDEEYDVIVLGTGLKECILSGLLSVDGLKVLHMDRNDYYGGESSSLNLTQLWKRFRGSDTPEENLGASREYNVDMIPKFIMANGLLVQTLIHTDVTKYLNFKAVDGSFVYKKGKIYKVPATDVEALKSPLMGLFEKRRARKFFIYVQDYDEKDPKSHEGLDLSKVTAREIISKYGLEDDTIDFIGHALALHNDDDYLDQPAIDFVKRIKLYAESLARFQGGSPYIYPLYGLGELPQAFARLSAVYGGTYMLNKPECKVEFDGSGKAIGVTSAGETAKCKKVVCDPSYLSEKVKKVGKVTRAVCIMSHPIPDTNDAHSVQIILPQKQLGRKSDMYLFCCSYAHNVAPKGKYIAFVSAEAETDNPEEELKPGIELLGPTDEIFYHSYDTYVPTNIQEEDNCFISATYDATTHFESTVVDVLDMYTKITGKTLDLSVDLSAASAAAEN.

It belongs to the Rab GDI family.

Its function is as follows. Regulates the GDP/GTP exchange reaction of most RAB proteins by inhibiting the dissociation of GDP from them, and the subsequent binding of GTP. This chain is Guanosine nucleotide diphosphate dissociation inhibitor At5g09550, found in Arabidopsis thaliana (Mouse-ear cress).